Here is a 404-residue protein sequence, read N- to C-terminus: CD209 antigen (404 aa).

The Cytoplasmic segment spans residues 1–37 (MSDSKEPRLQQLGLLEEEQLRGLGFRQTRGYKSLAGC). Short sequence motifs (endocytosis signal) lie at residues 14–15 (LL), 16–18 (EEE), and 31–34 (YKSL). A helical; Signal-anchor for type II membrane protein membrane pass occupies residues 38–58 (LGHGPLVLQLLSFTLLAGLLV). The Extracellular portion of the chain corresponds to 59–404 (QVSKVPSSIS…APATPNPPPA (346 aa)). Residue Asn80 is glycosylated (N-linked (GlcNAc...) asparagine). Repeat copies occupy residues 96–118 (KLQE…PEKS), 119–141 (KLQE…PEKS), 142–164 (KLQE…PEKS), 165–187 (KMQE…PEKS), 188–210 (KQQE…PEKS), 211–233 (KQQE…PEKS), and 234–257 (KQQE…HPCP). Residues 96–257 (KLQEIYQELT…AVERLCHPCP (162 aa)) form a 7 X approximate tandem repeats region. Intrachain disulfides connect Cys256–Cys267, Cys284–Cys377, and Cys356–Cys369. Residues 263–378 (FQGNCYFMSN…CNLAKFWICK (116 aa)) form the C-type lectin domain. Residues Glu347, Asn349, Val351, Glu354, Asn365, and Asp366 each coordinate Ca(2+).

As to quaternary structure, homotetramer. Interacts with C1QBP; the interaction is indicative for a C1q:C1QBP:CD209 signaling complex. Interacts with ICAM2 and ICAM3 by binding to mannose-like carbohydrates. Interacts (via C-type lectin domain) with CEACAM1 (via Lewis X moieties); this interaction is regulated by the glycosylation pattern of CEACAM1 on cell types and regulates contact between dendritic cells and neutrophils. (Microbial infection) Interacts with HIV-1 and HIV-2 gp120. In terms of assembly, (Microbial infection) Interacts with ebolavirus envelope glycoproteins. As to quaternary structure, (Microbial infection) Interacts with cytomegalovirus gB protein. (Microbial infection) Interacts with HCV E2 protein. In terms of assembly, (Microbial infection) Interacts with dengue virus major envelope protein E. As to quaternary structure, (Microbial infection) Interacts with measles hemagglutinin. (Microbial infection) Interacts with herpes simplex virus 1 surface proteins. In terms of assembly, (Microbial infection) Interacts with Influenzavirus A hemagglutinin. As to quaternary structure, (Microbial infection) Interacts with SARS-CoV spike glycoprotein. (Microbial infection) Interacts with Japanese encephalitis virus E protein. In terms of assembly, (Microbial infection) Interacts with Lassa virus Glycoprotein. As to quaternary structure, (Microbial infection) Interacts with marburg virus glycoprotein. (Microbial infection) Interacts with Respiratory syncytial virus glycoprotein G. In terms of assembly, (Microbial infection) Interacts with Rift valley fever virus and uukuniemi virus envelope glycoprotein. As to quaternary structure, (Microbial infection) Interacts with west-nile virus envelope glycoprotein. (Microbial infection) Interacts with whole M.bovis cells in a Ca(2+)-dependent and independent manner; in vitro experiments suggest it interacts with CH60.1 (groL1), DnaK, GADPH (gap) and LrpG. In terms of tissue distribution, predominantly expressed in dendritic cells and in DC-residing tissues. Also found in placental macrophages, endothelial cells of placental vascular channels, peripheral blood mononuclear cells, and THP-1 monocytes.

Its subcellular location is the cell membrane. It is found in the secreted. In terms of biological role, pathogen-recognition receptor expressed on the surface of immature dendritic cells (DCs) and involved in initiation of primary immune response. Thought to mediate the endocytosis of pathogens which are subsequently degraded in lysosomal compartments. The receptor returns to the cell membrane surface and the pathogen-derived antigens are presented to resting T-cells via MHC class II proteins to initiate the adaptive immune response. Its function is as follows. On DCs it is a high affinity receptor for ICAM2 and ICAM3 by binding to mannose-like carbohydrates. May act as a DC rolling receptor that mediates transendothelial migration of DC presursors from blood to tissues by binding endothelial ICAM2. Seems to regulate DC-induced T-cell proliferation by binding to ICAM3 on T-cells in the immunological synapse formed between DC and T-cells. (Microbial infection) Acts as an attachment receptor for HIV-1 and HIV-2. Functionally, (Microbial infection) Acts as an attachment receptor for Ebolavirus. In terms of biological role, (Microbial infection) Acts as an attachment receptor for Cytomegalovirus. Its function is as follows. (Microbial infection) Acts as an attachment receptor for HCV. (Microbial infection) Acts as an attachment receptor for Dengue virus. Functionally, (Microbial infection) Acts as an attachment receptor for Measles virus. In terms of biological role, (Microbial infection) Acts as an attachment receptor for Herpes simplex virus 1. Its function is as follows. (Microbial infection) Acts as an attachment receptor for Influenzavirus A. (Microbial infection) Acts as an attachment receptor for SARS-CoV. Functionally, (Microbial infection) Acts as an attachment receptor for Japanese encephalitis virus. In terms of biological role, (Microbial infection) Acts as an attachment receptor for Lassa virus. Acts as an attachment receptor for Marburg virusn. Its function is as follows. (Microbial infection) Acts as an attachment receptor for Respiratory syncytial virus. (Microbial infection) Acts as an attachment receptor for Rift valley fever virus and uukuniemi virus. Functionally, (Microbial infection) Acts as an attachment receptor for West-nile virus. In terms of biological role, (Microbial infection) Probably recognizes in a calcium-dependent manner high mannose N-linked oligosaccharides in a variety of bacterial pathogen antigens, including Leishmania pifanoi LPG, Lewis-x antigen in Helicobacter pylori LPS, mannose in Klebsiella pneumonae LPS, di-mannose and tri-mannose in Mycobacterium tuberculosis ManLAM and Lewis-x antigen in Schistosoma mansoni SEA. Recognition of M.tuberculosis by dendritic cells occurs partially via this molecule. The protein is CD209 antigen (CD209) of Homo sapiens (Human).